An 83-amino-acid chain; its full sequence is Large ribosomal subunit protein bL31B (83 aa).

It belongs to the bacterial ribosomal protein bL31 family. Type B subfamily. In terms of assembly, part of the 50S ribosomal subunit.

In Tropheryma whipplei (strain TW08/27) (Whipple's bacillus), this protein is Large ribosomal subunit protein bL31B.